The sequence spans 741 residues: MASSSSLTLSQVIFSPSLPRHGSSSSSSPSLSFSTFSGLKSTPFTSSHRRILPSTTVTKQQFSVRASAAVETLEKTDAAIVEKSVNTIRFLAIDAVEKANSGHPGLPMGCAPMGHILYDEVMKYNPKNPYWFNRDRFVLSAGHGCMLQYALLHLAGYDSVQEDDLKSFRQWGSRIPGHPENFETPGVEVTTGPLGQGIANAVGLAVAEKHLAARFNKPDAEIVDHYTYVILGDGCQMEGISNEVCSLAGHWGLGKLIAFYDDNHISIDGDTEIAFTEDVSARFESLGWHVIWVKNGNTGYDEIRAAIKEAKAVKDKPTMIKVTTTIGFGSPNKANSYSVHGSGLGAKEVEATRNNLGWPYEPFHVPEDVKSHWSRHTPEGAALETEWNAKFAEYEKKYAEEAADLKSIITGELPAGWEKALPTYTPESPADATRNLSQQNLNALAKVLPGFLGGSADLASSNMTLLKMFGDFQKNTPEERNLRFGVREHGMGAICNGIALHSLGLIPYCATFFVFTDYMRGAMRISALSEAGVIYVMTHDSIGLGEDGPTHQPIEHLASFRAMPNILMFRPADGNETAGAYKVAVLKRKTPSILALSRQKLPQLAGTSIEGAAKGGYIVSDNSSGNKPDVILIGTGSELEIAVKAAEELKKEGKTVRVVSFVCWELYDEQSAEYKESVLPSSVTARVSIEAGSTFGWQKFVGDKGKAIGIDGFGASAPADKIYKEFGITAEAVVAAAKQVS.

A chloroplast-targeting transit peptide spans 1 to 67 (MASSSSLTLS…TKQQFSVRAS (67 aa)). His-103 serves as a coordination point for substrate. Thiamine diphosphate contacts are provided by residues His-143 and 192 to 194 (GPL). Asp-233 contributes to the Mg(2+) binding site. Thiamine diphosphate-binding residues include Gly-234 and Asn-263. Residues Asn-263 and Ile-265 each contribute to the Mg(2+) site. The substrate site is built by His-340, Arg-434, and Ser-461. His-340 serves as a coordination point for thiamine diphosphate. 2 residues coordinate thiamine diphosphate: Glu-488 and Phe-515. Glu-488 (proton donor) is an active-site residue. The substrate site is built by His-539, Asp-547, and Arg-598.

It belongs to the transketolase family. In terms of assembly, homodimer. Mg(2+) serves as cofactor. It depends on Ca(2+) as a cofactor. The cofactor is Mn(2+). Requires Co(2+) as cofactor. Thiamine diphosphate is required as a cofactor.

The protein localises to the plastid. The protein resides in the chloroplast thylakoid membrane. It catalyses the reaction D-sedoheptulose 7-phosphate + D-glyceraldehyde 3-phosphate = aldehydo-D-ribose 5-phosphate + D-xylulose 5-phosphate. Its pathway is carbohydrate biosynthesis; Calvin cycle. Its function is as follows. Catalyzes the reversible transfer of a two-carbon ketol group from fructose-6-phosphate or sedoheptulose-7-phosphate to glyceraldehyde-3-phosphate to yield xylulose-5-phosphate and erythrose-4-phosphate or ribose-5-phosphate, respectively. This Solanum tuberosum (Potato) protein is Transketolase, chloroplastic.